The sequence spans 1415 residues: Zygote defective protein 9 (1415 aa).

2 TOG regions span residues 1 to 250 and 251 to 530; these read MSNW…AKNA and PPVA…AGPA. Positions 21 to 48 form a coiled coil; that stretch reads DELRESKKWQERKEALEALLKVLTDNER. HEAT repeat units lie at residues 30-68, 95-132, 135-172, and 179-217; these read QERK…VLAK, SFAG…TMQS, TGQE…AKQP, and VVPV…VKNL. The interval 243-278 is disordered; sequence AEEQAKNAPPVAPTSSTPSASAASGDPSGGTATAVV. The segment covering 255–276 has biased composition (low complexity); sequence PTSSTPSASAASGDPSGGTATA. HEAT repeat units follow at residues 339–377, 381–418, 420–457, and 464–502; these read ANYG…GLRT, PFAV…TTNL, AVGE…QTMP, and LIPS…SLQL. The disordered stretch occupies residues 544–603; sequence APPAAAPPKKTAPPKKQPEDEEVVEEEDEPLKPPPGDKKKKVPVKENEENEPPVVAPKAE. The segment covering 562–572 has biased composition (acidic residues); sequence EDEEVVEEEDE. The tract at residues 602–867 is TOG 3; it reads AELLLSDNED…VEERIKRTGV (266 aa). HEAT repeat units lie at residues 706–743, 764–801, and 804–841; these read IKVL…LKTG, VGPL…NAGI, and LKSL…FEGD. The tract at residues 867–914 is disordered; the sequence is VKPGSGVVTSPPTGGPKILVPQQQGSVVRRPASRSRTREPEPEEVQSD.

This sequence belongs to the TOG/XMAP215 family. As to quaternary structure, interacts with tac-1 to form a heterodimer.

It localises to the cytoplasm. The protein localises to the cytoskeleton. It is found in the spindle pole. The protein resides in the microtubule organizing center. Its subcellular location is the centrosome. Its function is as follows. Plays a major role in organizing microtubules and spindle poles during mitosis and meiosis in one-cell stage embryos. Required for default nucleus positioning in oocytes. This is Zygote defective protein 9 from Caenorhabditis elegans.